Here is a 323-residue protein sequence, read N- to C-terminus: Fructose-1,6-bisphosphatase class 1 (323 aa).

The Mg(2+) site is built by glutamate 84, aspartate 103, leucine 105, and aspartate 106. Substrate is bound by residues 106-109, asparagine 198, and lysine 264; that span reads DGSS. Position 270 (glutamate 270) interacts with Mg(2+).

Belongs to the FBPase class 1 family. As to quaternary structure, homotetramer. Mg(2+) is required as a cofactor.

The protein resides in the cytoplasm. The catalysed reaction is beta-D-fructose 1,6-bisphosphate + H2O = beta-D-fructose 6-phosphate + phosphate. Its pathway is carbohydrate biosynthesis; gluconeogenesis. This Hydrogenovibrio crunogenus (strain DSM 25203 / XCL-2) (Thiomicrospira crunogena) protein is Fructose-1,6-bisphosphatase class 1.